Here is a 445-residue protein sequence, read N- to C-terminus: Exodeoxyribonuclease 7 large subunit (445 aa).

This sequence belongs to the XseA family. As to quaternary structure, heterooligomer composed of large and small subunits.

Its subcellular location is the cytoplasm. The catalysed reaction is Exonucleolytic cleavage in either 5'- to 3'- or 3'- to 5'-direction to yield nucleoside 5'-phosphates.. Functionally, bidirectionally degrades single-stranded DNA into large acid-insoluble oligonucleotides, which are then degraded further into small acid-soluble oligonucleotides. This Shewanella oneidensis (strain ATCC 700550 / JCM 31522 / CIP 106686 / LMG 19005 / NCIMB 14063 / MR-1) protein is Exodeoxyribonuclease 7 large subunit.